The sequence spans 511 residues: Maturase K (511 aa).

This sequence belongs to the intron maturase 2 family. MatK subfamily.

The protein resides in the plastid. The protein localises to the chloroplast. Usually encoded in the trnK tRNA gene intron. Probably assists in splicing its own and other chloroplast group II introns. In Psathyrostachys juncea (Russian wildrye), this protein is Maturase K.